The following is a 302-amino-acid chain: Elongation factor Ts (302 aa).

An involved in Mg(2+) ion dislocation from EF-Tu region spans residues threonine 82–valine 85.

Belongs to the EF-Ts family.

It localises to the cytoplasm. Functionally, associates with the EF-Tu.GDP complex and induces the exchange of GDP to GTP. It remains bound to the aminoacyl-tRNA.EF-Tu.GTP complex up to the GTP hydrolysis stage on the ribosome. The chain is Elongation factor Ts from Nitrosospira multiformis (strain ATCC 25196 / NCIMB 11849 / C 71).